We begin with the raw amino-acid sequence, 112 residues long: Phosphoribosyl-ATP pyrophosphatase (112 aa).

It belongs to the PRA-PH family.

Its subcellular location is the cytoplasm. The catalysed reaction is 1-(5-phospho-beta-D-ribosyl)-ATP + H2O = 1-(5-phospho-beta-D-ribosyl)-5'-AMP + diphosphate + H(+). The protein operates within amino-acid biosynthesis; L-histidine biosynthesis; L-histidine from 5-phospho-alpha-D-ribose 1-diphosphate: step 2/9. In Chromohalobacter salexigens (strain ATCC BAA-138 / DSM 3043 / CIP 106854 / NCIMB 13768 / 1H11), this protein is Phosphoribosyl-ATP pyrophosphatase.